Here is a 1176-residue protein sequence, read N- to C-terminus: Translation initiation factor IF-2 (1176 aa).

Composition is skewed to low complexity over residues 32-44, 57-79, 94-166, and 193-235; these read IAAKSHSSSISDS, ASPSQPTAPAAKPAPAKPAAGKS, APVA…AAPS, and KPTP…VKPT. 2 disordered regions span residues 32 to 502 and 535 to 567; these read IAAK…QRQK and RPAKPKAQQRTAPKPVAAVRKRRKETARQRQRR. Residues 251–270 show a composition bias toward pro residues; the sequence is APPPASTPRPAPSRPTPRPA. 2 stretches are compositionally biased toward low complexity: residues 388-409 and 439-469; these read GRPGAPTRPGAPTRPGMPGGMR and NRPTEAAGTATPPVARPTAPSAPRRPGFRPG. A compositionally biased stretch (basic and acidic residues) spans 478–492; that stretch reads GRPDWDDSAKLEALR. Residues 553 to 567 are compositionally biased toward basic residues; it reads VRKRRKETARQRQRR. Residues 668-840 form the tr-type G domain; it reads RRPPVVTVMG…LLLVTEVEDL (173 aa). A G1 region spans residues 677–684; it reads GHVDHGKT. 677 to 684 is a GTP binding site; the sequence is GHVDHGKT. The tract at residues 702 to 706 is G2; the sequence is GITQH. The segment at 727 to 730 is G3; the sequence is DTPG. GTP-binding positions include 727-731 and 781-784; these read DTPGH and NKID. The tract at residues 781-784 is G4; sequence NKID. Residues 817–819 form a G5 region; that stretch reads SAI.

This sequence belongs to the TRAFAC class translation factor GTPase superfamily. Classic translation factor GTPase family. IF-2 subfamily.

It is found in the cytoplasm. In terms of biological role, one of the essential components for the initiation of protein synthesis. Protects formylmethionyl-tRNA from spontaneous hydrolysis and promotes its binding to the 30S ribosomal subunits. Also involved in the hydrolysis of GTP during the formation of the 70S ribosomal complex. This is Translation initiation factor IF-2 from Synechococcus sp. (strain CC9902).